The primary structure comprises 24 residues: SM-11044-binding protein (24 aa).

May mediate relaxation of depolarized colon tonus. It binds iodocyanopindolol and SM-11044. The chain is SM-11044-binding protein from Rattus norvegicus (Rat).